Reading from the N-terminus, the 416-residue chain is Phosphoglycerate kinase (416 aa).

14 residues coordinate (2R)-3-phosphoglycerate: V23, D24, F25, N26, Q38, R39, S62, H63, G65, R66, L121, R122, H168, and R169. G212 contacts ADP. G212 provides a ligand contact to CDP. 2 residues coordinate AMP: A213 and K214. ATP is bound at residue A213. A213 provides a ligand contact to Mg(2+). Mg(2+) is bound by residues A216 and D217. A CDP-binding site is contributed by D217. Residue K218 coordinates AMP. K218 provides a ligand contact to ATP. Residue G236 coordinates ADP. G236 lines the CDP pocket. The AMP site is built by G237 and G311. ATP contacts are provided by G237 and G311. Residues G336 and F341 each contribute to the CDP site. F341 is a binding site for ADP. E342 provides a ligand contact to AMP. ATP contacts are provided by E342, D373, and T374. A Mg(2+)-binding site is contributed by D373.

Belongs to the phosphoglycerate kinase family. Monomer. Mg(2+) serves as cofactor.

It is found in the cytoplasm. It localises to the mitochondrion. The enzyme catalyses (2R)-3-phosphoglycerate + ATP = (2R)-3-phospho-glyceroyl phosphate + ADP. It participates in carbohydrate degradation; glycolysis; pyruvate from D-glyceraldehyde 3-phosphate: step 2/5. Catalyzes one of the two ATP producing reactions in the glycolytic pathway via the reversible conversion of 1,3-diphosphoglycerate to 3-phosphoglycerate. Both L- and D- forms of purine and pyrimidine nucleotides can be used as substrates, but the activity is much lower on pyrimidines. Negatively regulates the biosynthesis of acetyl-CoA from pyruvate in the mitochondrion. The chain is Phosphoglycerate kinase (PGK1) from Eremothecium gossypii (strain ATCC 10895 / CBS 109.51 / FGSC 9923 / NRRL Y-1056) (Yeast).